We begin with the raw amino-acid sequence, 224 residues long: Putative gastrointestinal growth factor xP4 (224 aa).

The first 17 residues, 1-17 (MANSVFWAIAVALVLGA), serve as a signal peptide directing secretion. 4 consecutive P-type domains span residues 25 to 68 (YRCG…YTPW), 73 to 117 (TICN…YQPI), 123 to 167 (RDCS…FKPE), and 173 to 216 (LQCA…FYPD). Intrachain disulfides connect Cys-27–Cys-53, Cys-37–Cys-52, Cys-47–Cys-64, Cys-75–Cys-102, Cys-86–Cys-101, Cys-96–Cys-113, Cys-125–Cys-152, Cys-136–Cys-151, Cys-146–Cys-163, Cys-175–Cys-201, Cys-185–Cys-200, and Cys-195–Cys-212. Asn-104 carries N-linked (GlcNAc...) asparagine glycosylation.

In terms of processing, glycosylated. Stomach mucosa.

It localises to the secreted. May act as a growth factor. This Xenopus laevis (African clawed frog) protein is Putative gastrointestinal growth factor xP4 (p4).